A 354-amino-acid chain; its full sequence is Nicotinate-nucleotide--dimethylbenzimidazole phosphoribosyltransferase (354 aa).

Glu-317 serves as the catalytic Proton acceptor.

Belongs to the CobT family. In terms of assembly, homodimer.

The catalysed reaction is 5,6-dimethylbenzimidazole + nicotinate beta-D-ribonucleotide = alpha-ribazole 5'-phosphate + nicotinate + H(+). The protein operates within nucleoside biosynthesis; alpha-ribazole biosynthesis; alpha-ribazole from 5,6-dimethylbenzimidazole: step 1/2. Its function is as follows. Catalyzes the synthesis of alpha-ribazole-5'-phosphate from nicotinate mononucleotide (NAMN) and 5,6-dimethylbenzimidazole (DMB). The chain is Nicotinate-nucleotide--dimethylbenzimidazole phosphoribosyltransferase from Salmonella arizonae (strain ATCC BAA-731 / CDC346-86 / RSK2980).